Reading from the N-terminus, the 160-residue chain is Cytochrome b6-f complex subunit 4 (160 aa).

The next 3 helical transmembrane spans lie at 36-56 (LLYT…GLAL), 95-115 (LLGV…PFIE), and 127-147 (PIAT…GIGA).

It belongs to the cytochrome b family. PetD subfamily. As to quaternary structure, the 4 large subunits of the cytochrome b6-f complex are cytochrome b6, subunit IV (17 kDa polypeptide, petD), cytochrome f and the Rieske protein, while the 4 small subunits are petG, petL, petM and petN. The complex functions as a dimer.

Its subcellular location is the plastid. The protein localises to the chloroplast thylakoid membrane. Component of the cytochrome b6-f complex, which mediates electron transfer between photosystem II (PSII) and photosystem I (PSI), cyclic electron flow around PSI, and state transitions. This is Cytochrome b6-f complex subunit 4 from Cyanidioschyzon merolae (strain NIES-3377 / 10D) (Unicellular red alga).